Consider the following 358-residue polypeptide: tRNA N6-adenosine threonylcarbamoyltransferase (358 aa).

Fe cation contacts are provided by His-122 and His-126. Residues 145–149 (LVSGG), Asp-178, Gly-191, and Asn-287 contribute to the substrate site. Residue Asp-315 participates in Fe cation binding.

Belongs to the KAE1 / TsaD family. Fe(2+) is required as a cofactor.

The protein localises to the cytoplasm. The enzyme catalyses L-threonylcarbamoyladenylate + adenosine(37) in tRNA = N(6)-L-threonylcarbamoyladenosine(37) in tRNA + AMP + H(+). In terms of biological role, required for the formation of a threonylcarbamoyl group on adenosine at position 37 (t(6)A37) in tRNAs that read codons beginning with adenine. Is involved in the transfer of the threonylcarbamoyl moiety of threonylcarbamoyl-AMP (TC-AMP) to the N6 group of A37, together with TsaE and TsaB. TsaD likely plays a direct catalytic role in this reaction. This Hydrogenovibrio crunogenus (strain DSM 25203 / XCL-2) (Thiomicrospira crunogena) protein is tRNA N6-adenosine threonylcarbamoyltransferase.